The chain runs to 246 residues: Large ribosomal subunit protein uL2 (246 aa).

The segment at 197–226 (SPYAHPHGGGSHPKGGTPVPKTAPPGQKVG) is disordered.

The protein belongs to the universal ribosomal protein uL2 family. Part of the 50S ribosomal subunit. Forms a bridge to the 30S subunit in the 70S ribosome.

In terms of biological role, one of the primary rRNA binding proteins. Required for association of the 30S and 50S subunits to form the 70S ribosome, for tRNA binding and peptide bond formation. It has been suggested to have peptidyltransferase activity; this is somewhat controversial. Makes several contacts with the 16S rRNA in the 70S ribosome. This Pyrobaculum islandicum (strain DSM 4184 / JCM 9189 / GEO3) protein is Large ribosomal subunit protein uL2.